We begin with the raw amino-acid sequence, 605 residues long: Heparan-sulfate 6-O-sulfotransferase 2 (605 aa).

Over 1-4 the chain is Cytoplasmic; it reads MALP. A disordered region spans residues 1-66; the sequence is MALPACAVRE…GVSHGFHTRP (66 aa). Residues 5–27 traverse the membrane as a helical; Signal-anchor for type II membrane protein segment; the sequence is ACAVREFEPPRQPERGAPVRTTC. Residues 9–18 show a composition bias toward basic and acidic residues; it reads REFEPPRQPE. The Lumenal segment spans residues 28–605; that stretch reads PRRHSRVEAE…DYIGSVEKWR (578 aa). N-linked (GlcNAc...) asparagine glycosylation is present at Asn-209. 233 to 241 lines the 3'-phosphoadenylyl sulfate pocket; it reads HIQKTGGTT. Substrate is bound by residues 263 to 264, Arg-280, Trp-285, and His-290; that span reads KK. His-290 acts as the Proton acceptor in catalysis. Residues Arg-325 and Ser-333 each contribute to the 3'-phosphoadenylyl sulfate site. The substrate site is built by His-337 and Trp-344. N-linked (GlcNAc...) asparagine glycosylation occurs at Asn-404. 457–459 is a binding site for 3'-phosphoadenylyl sulfate; that stretch reads TQY. An N-linked (GlcNAc...) asparagine glycan is attached at Asn-460. A 3'-phosphoadenylyl sulfate-binding site is contributed by 463-464; that stretch reads RA. A disordered region spans residues 530-605; sequence FQSQGQGQSQ…DYIGSVEKWR (76 aa). The span at 531–571 shows a compositional bias: low complexity; sequence QSQGQGQSQNPNQNQSQNPNPNANQNLTQNLMQNLTQSLSQ. Residues Asn-544, Asn-556, Asn-564, Asn-589, and Asn-592 are each glycosylated (N-linked (GlcNAc...) asparagine). The span at 579–597 shows a compositional bias: polar residues; that stretch reads KQNSGKEQNDNTSNGTNDY.

The protein belongs to the sulfotransferase 6 family.

It is found in the membrane. The enzyme catalyses alpha-D-glucosaminyl-[heparan sulfate](n) + 3'-phosphoadenylyl sulfate = 6-sulfo-alpha-D-glucosaminyl-[heparan sulfate](n) + adenosine 3',5'-bisphosphate + H(+). Its function is as follows. 6-O-sulfation enzyme which catalyzes the transfer of sulfate from 3'-phosphoadenosine 5'-phosphosulfate (PAPS) to position 6 of the N-sulfoglucosamine residue (GlcNS) of heparan sulfate. The protein is Heparan-sulfate 6-O-sulfotransferase 2 of Homo sapiens (Human).